We begin with the raw amino-acid sequence, 883 residues long: Phycobiliprotein ApcE (883 aa).

Cys-181 contacts (2R,3E)-phycocyanobilin. 3 consecutive PBS-linker domains span residues Ser-238–Thr-418, Ser-488–Leu-669, and Arg-684–Lys-861.

It belongs to the phycobilisome linker protein family. Post-translationally, contains one covalently linked bilin chromophore. This protein autochromophorylates (Potential).

The protein localises to the plastid. It is found in the cyanelle thylakoid membrane. In terms of biological role, this protein is postulated to act both as terminal energy acceptor and as a linker polypeptide that stabilizes the phycobilisome architecture. May have intrinsic bilin lyase activity. This Cyanophora paradoxa protein is Phycobiliprotein ApcE (apcE).